We begin with the raw amino-acid sequence, 350 residues long: Probable 2-dehydropantoate 2-reductase (350 aa).

NADP(+) contacts are provided by residues G9–G14 and N115. Substrate is bound at residue N115. The active-site Proton donor is the K213. 3 residues coordinate substrate: N217, N221, and S295. Position 307 (E307) interacts with NADP(+).

This sequence belongs to the ketopantoate reductase family.

The catalysed reaction is (R)-pantoate + NADP(+) = 2-dehydropantoate + NADPH + H(+). It functions in the pathway cofactor biosynthesis; (R)-pantothenate biosynthesis; (R)-pantoate from 3-methyl-2-oxobutanoate: step 2/2. In terms of biological role, catalyzes the NADPH-dependent reduction of ketopantoate into pantoic acid. This chain is Probable 2-dehydropantoate 2-reductase, found in Schizosaccharomyces pombe (strain 972 / ATCC 24843) (Fission yeast).